The following is a 399-amino-acid chain: Bombesin receptor subtype-3 (399 aa).

The Extracellular portion of the chain corresponds to 1–41 (MSQKQPQSPNQTLISITNDTESSSSVVSNDTTNKGWTGDNS). Asn10 and Asn18 each carry an N-linked (GlcNAc...) asparagine glycan. A helical transmembrane segment spans residues 42–63 (PGIEALCAIYITYAVIISVGIL). The Cytoplasmic segment spans residues 64 to 82 (GNAILIKVFFKTKSMQTVP). Residues 83–103 (NIFITSLALGDLLLLLTCVPV) traverse the membrane as a helical segment. Residues 104–121 (DATHYLAEGWLFGRIGCK) are Extracellular-facing. A disulfide bridge connects residues Cys120 and Cys203. Residues 122 to 143 (VLSFIRLTSVGVSVFTLTILSA) form a helical membrane-spanning segment. The Cytoplasmic portion of the chain corresponds to 144–163 (DRYKAVVKPLERQPSNAILK). The chain crosses the membrane as a helical span at residues 164 to 184 (TCAKAGCIWIMSMIFALPEAI). Topologically, residues 185-220 (FSNVHTLRDPNKNMTSEWCAFYPVSEKLLQEIHALL) are extracellular. The helical transmembrane segment at 221–241 (SFLVFYIIPLSIISVYYSLIA) threads the bilayer. Over 242–272 (RTLYKSTLNIPTEEQSHARKQVESRKRIAKT) the chain is Cytoplasmic. The chain crosses the membrane as a helical span at residues 273 to 293 (VLVLVALFALCWLPNHLLNLY). Residues 294–313 (HSFTHKAYEDSSAIHFIVTI) are Extracellular-facing. A helical membrane pass occupies residues 314–333 (FSRVLAFSNSCVNPFALYWL). The Cytoplasmic segment spans residues 334–399 (SKTFQKQFKA…RPMKKEENRV (66 aa)). A lipid anchor (S-palmitoyl cysteine) is attached at Cys347.

Belongs to the G-protein coupled receptor 1 family. In terms of assembly, interacts with C6orf89. In terms of tissue distribution, mainly in uteri of pregnant animals.

It localises to the cell membrane. In terms of biological role, role in sperm cell division, maturation, or function. The relative order of ligand affinity is GRP = neuromedin-C &gt;&gt; neuromedin-B. This receptor mediates its action by association with G proteins that activate a phosphatidylinositol-calcium second messenger system. In Cavia porcellus (Guinea pig), this protein is Bombesin receptor subtype-3 (BRS3).